We begin with the raw amino-acid sequence, 197 residues long: Phosphoheptose isomerase (197 aa).

The 162-residue stretch at 36–197 (MVNALLNEGK…IDSQLFGSEE (162 aa)) folds into the SIS domain. 51–53 (NGG) provides a ligand contact to substrate. Residues His60 and Glu64 each contribute to the Zn(2+) site. Residues Glu64, 93–94 (ND), 119–121 (STS), Ser124, and Gln174 contribute to the substrate site. Zn(2+)-binding residues include Gln174 and His182.

Belongs to the SIS family. GmhA subfamily. Homotetramer. Zn(2+) serves as cofactor.

Its subcellular location is the cytoplasm. It carries out the reaction 2 D-sedoheptulose 7-phosphate = D-glycero-alpha-D-manno-heptose 7-phosphate + D-glycero-beta-D-manno-heptose 7-phosphate. Its pathway is carbohydrate biosynthesis; D-glycero-D-manno-heptose 7-phosphate biosynthesis; D-glycero-alpha-D-manno-heptose 7-phosphate and D-glycero-beta-D-manno-heptose 7-phosphate from sedoheptulose 7-phosphate: step 1/1. In terms of biological role, catalyzes the isomerization of sedoheptulose 7-phosphate in D-glycero-D-manno-heptose 7-phosphate. In Pseudomonas syringae pv. syringae (strain B728a), this protein is Phosphoheptose isomerase.